A 1288-amino-acid chain; its full sequence is Photoreceptor cilium actin regulator (1288 aa).

Gly2 carries N-myristoyl glycine lipidation. The S-palmitoyl cysteine moiety is linked to residue Cys3. Disordered regions lie at residues 78-147, 368-401, 423-453, 467-527, 563-605, 686-707, 813-1109, 1132-1169, and 1190-1288; these read MGDP…KWKR, QTSW…QQSP, QPRA…LGTS, PHLS…PFQA, DWSE…SHVE, QKCN…NAIP, AAKS…EDSQ, EAKP…SSGP, and LRRT…EEVS. 3 stretches are compositionally biased toward polar residues: residues 96–109, 382–401, and 434–453; these read TKTS…SQSH, SVTS…QQSP, and CLSS…LGTS. The span at 483-495 shows a compositional bias: acidic residues; it reads DSEDSSPEEEEED. Composition is skewed to polar residues over residues 848 to 857, 894 to 904, 927 to 946, and 966 to 976; these read SPESSKSTEN, SKSTASLTKPH, PPAT…QAEK, and PSGQNRTSESS. The segment covering 1018–1028 has biased composition (low complexity); sequence PAQPSPSAVQT. 2 stretches are compositionally biased toward pro residues: residues 1051-1063 and 1071-1094; these read PHQP…PPES and PSPP…PPMS. The segment covering 1097 to 1106 has biased composition (basic and acidic residues); it reads QEHKETRDSE. The segment covering 1209-1226 has biased composition (polar residues); the sequence is DPTSTSYESQLGQNSSSE. Residues 1268 to 1277 show a composition bias toward basic and acidic residues; the sequence is RTGHIQDKSQ. The span at 1278–1288 shows a compositional bias: polar residues; it reads PEAQPQQEEVS.

Specifically expressed in retina.

It localises to the cell projection. It is found in the cilium. The protein resides in the photoreceptor outer segment. Its subcellular location is the photoreceptor inner segment. Plays an essential role for normal photoreceptor cell maintenance and vision. In Homo sapiens (Human), this protein is Photoreceptor cilium actin regulator.